The primary structure comprises 363 residues: Flagellar P-ring protein (363 aa).

An N-terminal signal peptide occupies residues 1–20; sequence MKIKLILACALMVFSAASSA.

It belongs to the FlgI family. The basal body constitutes a major portion of the flagellar organelle and consists of four rings (L,P,S, and M) mounted on a central rod.

It localises to the periplasm. The protein resides in the bacterial flagellum basal body. Functionally, assembles around the rod to form the L-ring and probably protects the motor/basal body from shearing forces during rotation. The polypeptide is Flagellar P-ring protein (Shewanella loihica (strain ATCC BAA-1088 / PV-4)).